The sequence spans 263 residues: MANKIDLKFKELKYKNKKAMIPFVTSGYPDVETTKKIVIEMEKSGADLIELGIPYSDPVADGPIIQISSSGALNNGLKIKDIMNMVKEVRKNVKIPIVYMGYFGCVFKYGLEKFIKDSKESGVDGIVIPDLPLEERERVKEIADRYEFYIIPLVAPTSEDRIGKIVNGAKGFIYCVSTNGVTGVRNIIANDVKAYIDVVSKASNVPKCIGFGISSPEMAQKMKEYCDGVIIGSAVMKIVEEDIPKEEMIRKVGEFISQVNEVL.

Active-site proton acceptor residues include E50 and D61.

It belongs to the TrpA family. Tetramer of two alpha and two beta chains.

It carries out the reaction (1S,2R)-1-C-(indol-3-yl)glycerol 3-phosphate + L-serine = D-glyceraldehyde 3-phosphate + L-tryptophan + H2O. It participates in amino-acid biosynthesis; L-tryptophan biosynthesis; L-tryptophan from chorismate: step 5/5. The alpha subunit is responsible for the aldol cleavage of indoleglycerol phosphate to indole and glyceraldehyde 3-phosphate. In Clostridium acetobutylicum (strain ATCC 824 / DSM 792 / JCM 1419 / IAM 19013 / LMG 5710 / NBRC 13948 / NRRL B-527 / VKM B-1787 / 2291 / W), this protein is Tryptophan synthase alpha chain.